A 512-amino-acid chain; its full sequence is Maturase K (512 aa).

Belongs to the intron maturase 2 family. MatK subfamily.

It localises to the plastid. The protein resides in the chloroplast. Its function is as follows. Usually encoded in the trnK tRNA gene intron. Probably assists in splicing its own and other chloroplast group II introns. In Lilium henryi (Henry's lily), this protein is Maturase K.